A 185-amino-acid polypeptide reads, in one-letter code: Homeobox-leucine zipper protein ATHB-22 (185 aa).

Residues 76-135 (TSEQLKFLERSFQEEIKLNPDRKMKLNPDRKMKLSKELGLQPRQIAVWFQNRKARWKNKQ) constitute a DNA-binding region (homeobox). Residues 136-164 (LEHLYESLRQEFDIVSREKELLQEELIQL) form a leucine-zipper region.

It belongs to the HD-ZIP homeobox family. Class I subfamily. As to expression, expressed in siliques.

It localises to the nucleus. Probable transcription factor. In Arabidopsis thaliana (Mouse-ear cress), this protein is Homeobox-leucine zipper protein ATHB-22 (ATHB-22).